A 308-amino-acid chain; its full sequence is Olfactory receptor OR9H1 (308 aa).

The Extracellular portion of the chain corresponds to 1–26; the sequence is MVNFTHVSEFVLLGFQGGPGMQAMLF. The chain crosses the membrane as a helical span at residues 27 to 47; sequence LIFLILYGIAVVGNLGMIVII. Topologically, residues 48–58 are cytoplasmic; it reads WVDAHLHTPMY. The chain crosses the membrane as a helical span at residues 59 to 81; the sequence is AFLQSLSLLDICYSSTIAPRALA. Over 82–95 the chain is Extracellular; the sequence is NSMQEDHTISFGGC. Cysteines 95 and 177 form a disulfide. A helical transmembrane segment spans residues 96–116; that stretch reads AAQFFFLSLFGITEAFLLAAM. Residues 117 to 137 lie on the Cytoplasmic side of the membrane; the sequence is AYDRFIAICNPLLYSVSMSHQ. A helical transmembrane segment spans residues 138–158; that stretch reads VCVLLISGSYLWGVVNAIAQT. The Extracellular portion of the chain corresponds to 159-203; it reads TMTFRLPFCGSNEINDFFCDVPPLLSLSCSDTFINQLVLLGLCGS. The helical transmembrane segment at 204–224 threads the bilayer; it reads IIVSTFLIVLVSYIYIISTIL. At 225-245 the chain is on the cytoplasmic side; sequence RIPTMQGCQKAFSTCASHLTG. The chain crosses the membrane as a helical span at residues 246-266; sequence VCLFFGTVFFMYAQPSAIFFM. The Extracellular portion of the chain corresponds to 267–269; the sequence is EQS. A helical membrane pass occupies residues 270 to 290; that stretch reads KIVSIFYTMVIPMLNPLIYSL. Over 291–308 the chain is Cytoplasmic; that stretch reads RNKEVKQALRRSMQKLSL.

It belongs to the G-protein coupled receptor 1 family.

It is found in the cell membrane. Functionally, odorant receptor. This Homo sapiens (Human) protein is Olfactory receptor OR9H1.